The following is a 692-amino-acid chain: MSRLSPLDKYRNIGIMAHIDAGKTTTTERILYYTGVSHKIGEVHEGTATMDWMEQEQERGITITSAATTCEWNDHRINIIDTPGHVDFTIEVERSLRVLDGAVAVFCSVGGVEPQSETVWRQADKYRVPRIAFINKMDRIGADFFRGVQMIKDRLKANPVPLQLPVGKEDYFKGIVDLVRMKAIIWDEESLGAKFHEEEIPADLLDEAKEWRDKLIEEISSHDDALMEKYLGGEELTEAEIMAAIRSCTINIQIIPVVCGSSFKNKGVQNLLDAVVDYMPSPLDIPAIKGIDESGAEVERKADDTEPFSALGFKIMTDPFVGQLTFIRVYSGVLQSGSYVYNATKGKRERIGRLLKMHANKREEIKEVYAGDIAAAVGLKYTTTGDTLCNEDQAVILESIEFPEPVISIAIEPKTKSDQEKLGLSLQKLASEDPSFRVKTDEETGQTIISGMGELHLEIIVDRMMREFKVEANVGKPQVAYRETITKKVKVEGKFVRQSGGRGQYGHVWLEVEPQPEPGKGYEFVDAIKGGVVPREYIPAVDKGIQEATDNGVLAGFPVVDVKVTLIDGSYHEVDSSEMAFKIAGSMGFKEGCQKAGPILLEPIMSVEVVVPEEYMGEVIGDLNSRRGRIMGMDSRAGAQVVSSMVPLANMFGYSTDLRSATQGRATYAMTFDHYEPVPKSVSDEIIAKVKG.

The 276-residue stretch at 8 to 283 folds into the tr-type G domain; sequence DKYRNIGIMA…AVVDYMPSPL (276 aa). GTP is bound by residues 17 to 24, 81 to 85, and 135 to 138; these read AHIDAGKT, DTPGH, and NKMD.

Belongs to the TRAFAC class translation factor GTPase superfamily. Classic translation factor GTPase family. EF-G/EF-2 subfamily.

It is found in the cytoplasm. Functionally, catalyzes the GTP-dependent ribosomal translocation step during translation elongation. During this step, the ribosome changes from the pre-translocational (PRE) to the post-translocational (POST) state as the newly formed A-site-bound peptidyl-tRNA and P-site-bound deacylated tRNA move to the P and E sites, respectively. Catalyzes the coordinated movement of the two tRNA molecules, the mRNA and conformational changes in the ribosome. The chain is Elongation factor G from Trichlorobacter lovleyi (strain ATCC BAA-1151 / DSM 17278 / SZ) (Geobacter lovleyi).